Consider the following 247-residue polypeptide: uncharacterized protein (247 aa).

Residues 11–85 enclose the HTH merR-type domain; that stretch reads GMSIGAVLDL…LKVIRAQLDA (75 aa). The segment at residues 14-38 is a DNA-binding region (H-T-H motif); the sequence is IGAVLDLLRPDFPDVTISKIRFLEA.

In terms of assembly, homodimer.

Transcriptional regulator that binds to its own promoter and thus may play a role in the regulation of the cotranscribed genes Rv1827 and Rv1828. Can also bind several promoter regions of genes that are essential, including ftsZ. Binds to the imperfect everted repeat sequence CTCAA through its winged-HTH motif. This is an uncharacterized protein from Mycobacterium tuberculosis (strain ATCC 25618 / H37Rv).